A 156-amino-acid polypeptide reads, in one-letter code: Male-specific protein scotti (156 aa).

The tract at residues 26-48 is disordered; sequence TADAGDDADTLEDGQQQQQQQHQ. N-linked (GlcNAc...) asparagine glycosylation occurs at Asn137.

This sequence belongs to the male-specific scotti family.

Its function is as follows. Post-meiotically transcribed gene that has a role in late spermiogenesis; required for actin cone progression during spermatid individualization. The protein is Male-specific protein scotti of Drosophila erecta (Fruit fly).